Here is a 318-residue protein sequence, read N- to C-terminus: Thymidylate synthase (318 aa).

Residues R25 and 180-181 (RR) each bind dUMP. C200 acts as the Nucleophile in catalysis. Residues 220-223 (RSGD), N231, and 261-263 (HIY) contribute to the dUMP site. D223 contributes to the (6R)-5,10-methylene-5,6,7,8-tetrahydrofolate binding site. A317 is a binding site for (6R)-5,10-methylene-5,6,7,8-tetrahydrofolate.

It belongs to the thymidylate synthase family. Bacterial-type ThyA subfamily. As to quaternary structure, homodimer.

The protein localises to the cytoplasm. It catalyses the reaction dUMP + (6R)-5,10-methylene-5,6,7,8-tetrahydrofolate = 7,8-dihydrofolate + dTMP. Its pathway is pyrimidine metabolism; dTTP biosynthesis. Its function is as follows. Catalyzes the reductive methylation of 2'-deoxyuridine-5'-monophosphate (dUMP) to 2'-deoxythymidine-5'-monophosphate (dTMP) while utilizing 5,10-methylenetetrahydrofolate (mTHF) as the methyl donor and reductant in the reaction, yielding dihydrofolate (DHF) as a by-product. This enzymatic reaction provides an intracellular de novo source of dTMP, an essential precursor for DNA biosynthesis. The protein is Thymidylate synthase of Lactobacillus helveticus (strain DPC 4571).